A 229-amino-acid polypeptide reads, in one-letter code: Chloride conductance regulatory protein ICln (229 aa).

The protein belongs to the pICln (TC 1.A.47) family. Homooligomer.

It localises to the cytoplasm. It is found in the nucleus. Its function is as follows. May participate in cellular volume control by activation of a swelling-induced chloride conductance pathway. This chain is Chloride conductance regulatory protein ICln, found in Arabidopsis thaliana (Mouse-ear cress).